We begin with the raw amino-acid sequence, 72 residues long: Peptide Ctri9194 (72 aa).

The first 23 residues, 1 to 23 (MKTQNVLLSFGIVFLMISFSSET), serve as a signal peptide directing secretion. Ile-38 carries the isoleucine amide modification. Positions 42–72 (SLKDVESLDFLFDPTFTAADLAVLENALEDY) are excised as a propeptide.

This sequence belongs to the non-disulfide-bridged peptide (NDBP) superfamily. Short antimicrobial peptide (group 4) family. As to expression, expressed by the venom gland.

Its subcellular location is the secreted. Functionally, antimicrobial peptide. The polypeptide is Peptide Ctri9194 (Chaerilus tricostatus (Scorpion)).